Here is a 668-residue protein sequence, read N- to C-terminus: Golgin subfamily A member 6-like protein 1 (668 aa).

Disordered stretches follow at residues 1 to 120, 323 to 356, 384 to 466, 481 to 591, and 603 to 639; these read MLMW…HQEA, IREQ…RQEE, EKMH…EMWR, KEKM…REQE, and EQEE…MRRQ. The segment covering 15-41 has biased composition (basic residues); sequence LPTHPHLPTHPHLPTHPHLPTHPHLPT. Over residues 51 to 72 the composition is skewed to basic and acidic residues; the sequence is MSKETRQSKLAEAKEQLTDHHP. 2 stretches are compositionally biased toward polar residues: residues 73 to 83 and 91 to 103; these read QTNPSVGTAAS and NNGT…TSGG. Residues 106–120 show a composition bias toward basic and acidic residues; that stretch reads SPEDEQKASHQHQEA. Residues 177 to 663 are a coiled coil; it reads LEQALSAVAT…EEKMQEHQEH (487 aa).

Belongs to the GOLGA6 family.

In Homo sapiens (Human), this protein is Golgin subfamily A member 6-like protein 1 (GOLGA6L1).